Here is a 247-residue protein sequence, read N- to C-terminus: Potassium channel Ftrac_2467 (247 aa).

A run of 6 helical transmembrane segments spans residues 23–44 (TRIE…VLSS), 56–78 (SMRD…YQHY), 89–117 (KVTI…RFLS), 142–165 (LKLL…LMYW), 187–210 (SIIA…IDPW), and 215–237 (TTIL…GRIT). Positions 24–30 (RIETFSD) match the RxxxFSD motif motif.

This sequence belongs to the TMEM175 family. As to quaternary structure, homotetramer.

It localises to the cell membrane. It carries out the reaction K(+)(in) = K(+)(out). Its function is as follows. Potassium channel; forms a potassium-permeable leak-like channel with weak selectivity for potassium. The channel is permeable for K(+), Rb(+) and Cs(+). This chain is Potassium channel Ftrac_2467, found in Marivirga tractuosa (strain ATCC 23168 / DSM 4126 / NBRC 15989 / NCIMB 1408 / VKM B-1430 / H-43) (Microscilla tractuosa).